The chain runs to 366 residues: Chorismate synthase (366 aa).

R48 and R54 together coordinate NADP(+). FMN contacts are provided by residues 125-127 (RSS), 238-239 (NA), G278, 293-297 (KPTSS), and R319.

Belongs to the chorismate synthase family. Homotetramer. It depends on FMNH2 as a cofactor.

The enzyme catalyses 5-O-(1-carboxyvinyl)-3-phosphoshikimate = chorismate + phosphate. It participates in metabolic intermediate biosynthesis; chorismate biosynthesis; chorismate from D-erythrose 4-phosphate and phosphoenolpyruvate: step 7/7. Catalyzes the anti-1,4-elimination of the C-3 phosphate and the C-6 proR hydrogen from 5-enolpyruvylshikimate-3-phosphate (EPSP) to yield chorismate, which is the branch point compound that serves as the starting substrate for the three terminal pathways of aromatic amino acid biosynthesis. This reaction introduces a second double bond into the aromatic ring system. The chain is Chorismate synthase from Ralstonia pickettii (strain 12J).